The primary structure comprises 1328 residues: DNA-directed RNA polymerase subunit beta (1328 aa).

The protein belongs to the RNA polymerase beta chain family. The RNAP catalytic core consists of 2 alpha, 1 beta, 1 beta' and 1 omega subunit. When a sigma factor is associated with the core the holoenzyme is formed, which can initiate transcription.

The catalysed reaction is RNA(n) + a ribonucleoside 5'-triphosphate = RNA(n+1) + diphosphate. Its function is as follows. DNA-dependent RNA polymerase catalyzes the transcription of DNA into RNA using the four ribonucleoside triphosphates as substrates. The sequence is that of DNA-directed RNA polymerase subunit beta from Karelsulcia muelleri (strain GWSS) (Sulcia muelleri).